The following is a 427-amino-acid chain: Enolase (427 aa).

Position 163 (glutamine 163) interacts with (2R)-2-phosphoglycerate. Catalysis depends on glutamate 205, which acts as the Proton donor. Mg(2+) is bound by residues aspartate 242, glutamate 285, and aspartate 312. Residues lysine 337, arginine 366, serine 367, and lysine 388 each contribute to the (2R)-2-phosphoglycerate site. Residue lysine 337 is the Proton acceptor of the active site.

This sequence belongs to the enolase family. Mg(2+) serves as cofactor.

It localises to the cytoplasm. The protein localises to the secreted. Its subcellular location is the cell surface. It carries out the reaction (2R)-2-phosphoglycerate = phosphoenolpyruvate + H2O. Its pathway is carbohydrate degradation; glycolysis; pyruvate from D-glyceraldehyde 3-phosphate: step 4/5. Catalyzes the reversible conversion of 2-phosphoglycerate (2-PG) into phosphoenolpyruvate (PEP). It is essential for the degradation of carbohydrates via glycolysis. The sequence is that of Enolase from Rhodopseudomonas palustris (strain BisA53).